A 170-amino-acid polypeptide reads, in one-letter code: Ureidoglycolate lyase (170 aa).

This sequence belongs to the ureidoglycolate lyase family. In terms of assembly, homodimer. Ni(2+) is required as a cofactor.

It catalyses the reaction (S)-ureidoglycolate = urea + glyoxylate. It participates in nitrogen metabolism; (S)-allantoin degradation. Its function is as follows. Catalyzes the catabolism of the allantoin degradation intermediate (S)-ureidoglycolate, generating urea and glyoxylate. Involved in the utilization of allantoin as nitrogen source. The protein is Ureidoglycolate lyase of Pseudomonas syringae pv. syringae (strain B728a).